The sequence spans 162 residues: Protein cornichon homolog 2 (162 aa).

Topologically, residues 1-10 (MAFTFAAFCY) are cytoplasmic. Residues 11 to 31 (MLTLVLCASLIFFIIWHIIAF) form a helical membrane-spanning segment. Residues 32 to 72 (DDLRTDFKDPIEQGNPSRARERIKNVERVCCLLRKLVVPEY) are Lumenal-facing. A helical transmembrane segment spans residues 73-93 (CIHGLFCLMFMCAAEWVTLGL). At 94 to 138 (NIPLLFYHLWRYFHRPADGSEVMFDPVSIMNVDILNYCQKEAWCK) the chain is on the cytoplasmic side. A helical membrane pass occupies residues 139–161 (LAFYLLSFFYYLYRVGATVRYVS). Residue alanine 162 is a topological domain, lumenal.

The protein belongs to the cornichon family.

The protein resides in the membrane. Its function is as follows. Regulates the trafficking and gating properties of AMPA-selective glutamate receptors (AMPARs). This is Protein cornichon homolog 2 (cnih2) from Xenopus laevis (African clawed frog).